A 235-amino-acid chain; its full sequence is MSGSDTSGSVHVDEHGHGKASSSYDGAGAPAPAPAPFQGHRKAGSGSSDVPFLLRSGGSGGDGLRRCLGLIDFVLRVAAFGPTLAAAISIGTSDERLSVFTNYFQFRARFDDFPAFEFFIVANAIAAGYMVLSLPFSAATIMSSKATGVKLLLLICDTIMVGLLTAAASAAAAMVYVAHEGNLRANWVPICLQFHGFCQRTSGAVIASFLAVFVLMVLIVMAAFTMPRRTHHTAS.

The disordered stretch occupies residues 1 to 46; sequence MSGSDTSGSVHVDEHGHGKASSSYDGAGAPAPAPAPFQGHRKAGSG. Residues 1–67 lie on the Cytoplasmic side of the membrane; it reads MSGSDTSGSV…GSGGDGLRRC (67 aa). The chain crosses the membrane as a helical span at residues 68–88; it reads LGLIDFVLRVAAFGPTLAAAI. Residues 89 to 115 are Extracellular-facing; the sequence is SIGTSDERLSVFTNYFQFRARFDDFPA. Residues 116 to 136 form a helical membrane-spanning segment; sequence FEFFIVANAIAAGYMVLSLPF. The Cytoplasmic segment spans residues 137–150; it reads SAATIMSSKATGVK. The chain crosses the membrane as a helical span at residues 151–171; it reads LLLLICDTIMVGLLTAAASAA. Residues 172–203 lie on the Extracellular side of the membrane; that stretch reads AAMVYVAHEGNLRANWVPICLQFHGFCQRTSG. The helical transmembrane segment at 204-224 threads the bilayer; sequence AVIASFLAVFVLMVLIVMAAF. Residues 225–235 lie on the Cytoplasmic side of the membrane; it reads TMPRRTHHTAS.

The protein belongs to the Casparian strip membrane proteins (CASP) family. Homodimer and heterodimers.

The protein localises to the cell membrane. Its function is as follows. Regulates membrane-cell wall junctions and localized cell wall deposition. Required for establishment of the Casparian strip membrane domain (CSD) and the subsequent formation of Casparian strips, a cell wall modification of the root endodermis that determines an apoplastic barrier between the intraorganismal apoplasm and the extraorganismal apoplasm and prevents lateral diffusion. The sequence is that of Casparian strip membrane protein 2 from Oryza sativa subsp. indica (Rice).